The chain runs to 263 residues: Small ribosomal subunit protein uS2 (263 aa).

The span at lysine 223–leucine 249 shows a compositional bias: basic and acidic residues. Residues lysine 223–glutamate 263 form a disordered region. Positions aspartate 250–glutamate 263 are enriched in acidic residues.

The protein belongs to the universal ribosomal protein uS2 family.

The polypeptide is Small ribosomal subunit protein uS2 (Campylobacter jejuni subsp. jejuni serotype O:6 (strain 81116 / NCTC 11828)).